The chain runs to 145 residues: D-aminoacyl-tRNA deacylase (145 aa).

The Gly-cisPro motif, important for rejection of L-amino acids signature appears at 137–138 (GP).

It belongs to the DTD family. As to quaternary structure, homodimer.

It is found in the cytoplasm. The enzyme catalyses glycyl-tRNA(Ala) + H2O = tRNA(Ala) + glycine + H(+). The catalysed reaction is a D-aminoacyl-tRNA + H2O = a tRNA + a D-alpha-amino acid + H(+). An aminoacyl-tRNA editing enzyme that deacylates mischarged D-aminoacyl-tRNAs. Also deacylates mischarged glycyl-tRNA(Ala), protecting cells against glycine mischarging by AlaRS. Acts via tRNA-based rather than protein-based catalysis; rejects L-amino acids rather than detecting D-amino acids in the active site. By recycling D-aminoacyl-tRNA to D-amino acids and free tRNA molecules, this enzyme counteracts the toxicity associated with the formation of D-aminoacyl-tRNA entities in vivo and helps enforce protein L-homochirality. The protein is D-aminoacyl-tRNA deacylase of Rhodococcus opacus (strain B4).